Consider the following 350-residue polypeptide: uncharacterized protein (350 aa).

Disordered stretches follow at residues 1–21 (MDSFHPTPGKPTTATSNSSLN), 237–266 (NSDVIESSAEDSSNTDNPSTKPSNEMPISP), and 278–298 (EMSTPNSNHSRSRTPSSKKRT). 2 stretches are compositionally biased toward polar residues: residues 10–21 (KPTTATSNSSLN) and 246–259 (EDSSNTDNPSTKPS). Residues 287 to 298 (SRSRTPSSKKRT) are compositionally biased toward basic residues.

It localises to the nucleus. This is an uncharacterized protein from Schizosaccharomyces pombe (strain 972 / ATCC 24843) (Fission yeast).